The primary structure comprises 161 residues: Dihydrofolate reductase (161 aa).

The region spanning 2 to 161 (NISLIAAISK…YNYSFEILSR (160 aa)) is the DHFR domain. 6–8 (IAA) provides a ligand contact to substrate. NADP(+) contacts are provided by residues 7–8 (AA) and 15–20 (IGYKNK). Asp28 contributes to the substrate binding site. Position 44–47 (44–47 (GRLT)) interacts with NADP(+). Residue Arg59 coordinates substrate. NADP(+) contacts are provided by residues 64 to 66 (ISS) and 96 to 101 (IGGAKI). Thr115 is a binding site for substrate.

The protein belongs to the dihydrofolate reductase family.

It catalyses the reaction (6S)-5,6,7,8-tetrahydrofolate + NADP(+) = 7,8-dihydrofolate + NADPH + H(+). The protein operates within cofactor biosynthesis; tetrahydrofolate biosynthesis; 5,6,7,8-tetrahydrofolate from 7,8-dihydrofolate: step 1/1. Functionally, key enzyme in folate metabolism. Catalyzes an essential reaction for de novo glycine and purine synthesis, and for DNA precursor synthesis. The polypeptide is Dihydrofolate reductase (folA) (Buchnera aphidicola subsp. Acyrthosiphon pisum (strain APS) (Acyrthosiphon pisum symbiotic bacterium)).